A 313-amino-acid chain; its full sequence is Homoserine O-acetyltransferase (313 aa).

Cys144 (acyl-thioester intermediate) is an active-site residue. Substrate-binding residues include Lys165 and Ser194. Catalysis depends on His236, which acts as the Proton acceptor. The active site involves Glu238. Arg250 provides a ligand contact to substrate.

Belongs to the MetA family.

The protein resides in the cytoplasm. It carries out the reaction L-homoserine + acetyl-CoA = O-acetyl-L-homoserine + CoA. Its pathway is amino-acid biosynthesis; L-methionine biosynthesis via de novo pathway; O-acetyl-L-homoserine from L-homoserine: step 1/1. Its function is as follows. Transfers an acetyl group from acetyl-CoA to L-homoserine, forming acetyl-L-homoserine. The chain is Homoserine O-acetyltransferase from Jannaschia sp. (strain CCS1).